Here is a 388-residue protein sequence, read N- to C-terminus: Transcription factor SOX-7 (388 aa).

Disordered regions lie at residues 20 to 46 (DAELSDGQSPPAVPRPPGDKGSESRIR) and 140 to 197 (RDQN…VDTY). Basic and acidic residues-rich tracts occupy residues 36 to 45 (PGDKGSESRI) and 146 to 164 (PEKRSGSRGALGEKEDRGE). A DNA-binding region (HMG box) is located at residues 45–113 (IRRPMNAFMV…QHMQDYPNYK (69 aa)). Residues 268-388 (VSMMSPVPGC…ATYYNSYSVS (121 aa)) enclose the Sox C-terminal domain.

In terms of assembly, interacts with CTNNB1/beta-catenin; this interaction may lead to the proteasomal degradation of active CTNNB1 and thus inhibition of Wnt/beta-catenin-stimulated transcription. As to expression, widely expressed in adult and fetal tissues. Present both in mesenchymal and epithelial cells in some adult tissues, including colon. Tends to be down-regulated in prostate adenocarcinomas and colorectal tumors due to promoter hypermethylation.

The protein resides in the nucleus. The protein localises to the cytoplasm. In terms of biological role, binds to and activates the CDH5 promoter, hence plays a role in the transcriptional regulation of genes expressed in the hemogenic endothelium and blocks further differentiation into blood precursors. May be required for the survival of both hematopoietic and endothelial precursors during specification. Competes with GATA4 for binding and activation of the FGF3 promoter. Represses Wnt/beta-catenin-stimulated transcription, probably by targeting CTNNB1 to proteasomal degradation. Binds the DNA sequence 5'-AACAAT-3'. The chain is Transcription factor SOX-7 (SOX7) from Homo sapiens (Human).